A 597-amino-acid chain; its full sequence is NADPH-dependent diflavin oxidoreductase 1 (597 aa).

The Flavodoxin-like domain maps to 6-150; sequence LLVLFGSQTG…AVDPWLRDLW (145 aa). FMN is bound by residues 12 to 17, 59 to 62, 97 to 106, and D132; these read SQTGTA, ATTG, and LGDSSYAKFN. Positions 188–207 are disordered; that stretch reads GSEGQRVAHPGSQEPPSESK. Residues 206–447 enclose the FAD-binding FR-type domain; it reads SKPFLAPMIS…VRPGSLAFPE (242 aa). Residues R350, 382–385, and 416–419 contribute to the FAD site; these read RAFS and GLCS. NADP(+) contacts are provided by residues T460, 515–516, 521–525, and D558; these read SR and KVYVQ. W596 contacts FAD.

Belongs to the NADPH-dependent diflavin oxidoreductase NDOR1 family. It in the N-terminal section; belongs to the flavodoxin family. The protein in the C-terminal section; belongs to the flavoprotein pyridine nucleotide cytochrome reductase family. As to quaternary structure, interacts with CIAPIN1; as part of the cytosolic iron-sulfur (Fe-S) protein assembly (CIA) machinery. Interacts with DCPS. Requires FAD as cofactor. FMN serves as cofactor. As to expression, low expression in brain, heart, kidney, pancreas, prostate and skeletal muscle. Highest levels in the placenta. Expressed in cancer cell lines including promyelocytic leukemia, HeLaS3, chronic myelagenous leukemia, lymphoblastic leukemia, Burkitt's lymphoma, colorectal adenocarcinoma, lung carcinoma, and melanoma G-361.

It localises to the cytoplasm. Its subcellular location is the perinuclear region. It catalyses the reaction 2 oxidized [2Fe-2S]-[protein] + NADPH = 2 reduced [2Fe-2S]-[protein] + NADP(+) + H(+). NADPH-dependent reductase which is a central component of the cytosolic iron-sulfur (Fe-S) protein assembly (CIA) machinery. Transfers electrons from NADPH via its FAD and FMN prosthetic groups to the [2Fe-2S] cluster of CIAPIN1, another key component of the CIA machinery. In turn, this reduced cluster provides electrons for assembly of cytosolic iron-sulfur cluster proteins. It can also reduce the [2Fe-2S] cluster of CISD1 and activate this protein implicated in Fe/S cluster repair. In vitro can fully activate methionine synthase/MTR in the presence of soluble cytochrome b5/CYB5A. The polypeptide is NADPH-dependent diflavin oxidoreductase 1 (Homo sapiens (Human)).